The sequence spans 31 residues: Cytochrome b6-f complex subunit 6 (31 aa).

A helical transmembrane segment spans residues 4–24 (ITSYFGFLLAALTITSALLIG).

It belongs to the PetL family. In terms of assembly, the 4 large subunits of the cytochrome b6-f complex are cytochrome b6, subunit IV (17 kDa polypeptide, PetD), cytochrome f and the Rieske protein, while the 4 small subunits are PetG, PetL, PetM and PetN. The complex functions as a dimer.

The protein localises to the plastid. It is found in the chloroplast thylakoid membrane. Functionally, component of the cytochrome b6-f complex, which mediates electron transfer between photosystem II (PSII) and photosystem I (PSI), cyclic electron flow around PSI, and state transitions. PetL is important for photoautotrophic growth as well as for electron transfer efficiency and stability of the cytochrome b6-f complex. This is Cytochrome b6-f complex subunit 6 from Piper cenocladum (Ant piper).